A 60-amino-acid polypeptide reads, in one-letter code: Large ribosomal subunit protein bL32 (60 aa).

The tract at residues 1 to 44 is disordered; sequence MAVQQNKKSRSARDMRRSHDALEASTLSVEKTTGEVHLRHHVSP. Positions 11–22 are enriched in basic and acidic residues; the sequence is SARDMRRSHDAL.

This sequence belongs to the bacterial ribosomal protein bL32 family.

This chain is Large ribosomal subunit protein bL32, found in Pseudomonas fluorescens (strain SBW25).